We begin with the raw amino-acid sequence, 298 residues long: MTDAAVSFAKDFLAGGVAAAISKTAVAPIERVKLLLQVQHASKQITADKQYKGIMDCVVRIPKEQGVLSFWRGNLANVIRYFPTQALNFAFKDKYKQIFLGGVDKRTQFWRYFAGNLASGGAAGATSLCFVYPLDFARTRLAADVGKAGDAREFKGLGDCLVKITKSDGIRGLYQGFNVSVQGIIIYRAAYFGIYDTAKGMLPDPKNTHIFISWMIAQSVTAVAGLTSYPFDTVRRRMMMQSGRKGSDIMYTGTIDCWKKIARDEGSKAFFKGAWSNVLRGMGGAFVLVLYDEIKKYT.

Met-1 carries the post-translational modification N-acetylmethionine. Residues 1–7 lie on the Mitochondrial intermembrane side of the membrane; sequence MTDAAVS. Thr-2 bears the N-acetylthreonine; in ADP/ATP translocase 2, N-terminally processed mark. The stretch at 6–98 is one Solcar 1 repeat; the sequence is VSFAKDFLAG…FAFKDKYKQI (93 aa). Ser-7 bears the Phosphoserine mark. The chain crosses the membrane as a helical span at residues 8-37; that stretch reads FAKDFLAGGVAAAISKTAVAPIERVKLLLQ. An N6-malonyllysine modification is found at Lys-23. Residues 38-74 are Mitochondrial matrix-facing; that stretch reads VQHASKQITADKQYKGIMDCVVRIPKEQGVLSFWRGN. Lys-43 carries the N6-succinyllysine modification. N6,N6,N6-trimethyllysine; alternate is present on Lys-52. Lys-52 is subject to N6,N6-dimethyllysine; alternate. Residue Lys-52 is modified to N6-methyllysine; alternate. The chain crosses the membrane as a helical span at residues 75-99; it reads LANVIRYFPTQALNFAFKDKYKQIF. ADP contacts are provided by Arg-80 and Lys-92. An N6-malonyllysine mark is found at Lys-92 and Lys-96. The Mitochondrial intermembrane portion of the chain corresponds to 100–109; sequence LGGVDKRTQF. At Lys-105 the chain carries N6-acetyllysine; alternate. Lys-105 carries the N6-succinyllysine; alternate modification. Residues 110 to 130 form a helical membrane-spanning segment; sequence WRYFAGNLASGGAAGATSLCF. Solcar repeat units lie at residues 111–201 and 212–297; these read RYFA…AKGM and ISWM…IKKY. Over 131-178 the chain is Mitochondrial matrix; it reads VYPLDFARTRLAADVGKAGDAREFKGLGDCLVKITKSDGIRGLYQGFN. Position 147 is an N6-methyllysine; alternate (Lys-147). Residues Lys-147 and Lys-155 each carry the N6-acetyllysine; alternate modification. N6-succinyllysine; alternate is present on residues Lys-147 and Lys-155. Lys-147 bears the N6-malonyllysine; alternate mark. 2 positions are modified to N6-acetyllysine: Lys-163 and Lys-166. A helical membrane pass occupies residues 179–199; sequence VSVQGIIIYRAAYFGIYDTAK. The Mitochondrial intermembrane portion of the chain corresponds to 200–210; the sequence is GMLPDPKNTHI. A helical membrane pass occupies residues 211 to 231; it reads FISWMIAQSVTAVAGLTSYPF. Residues 232 to 273 lie on the Mitochondrial matrix side of the membrane; that stretch reads DTVRRRMMMQSGRKGSDIMYTGTIDCWKKIARDEGSKAFFKG. ADP is bound at residue Arg-235. The tract at residues 235 to 240 is important for transport activity; that stretch reads RRRMMM. A Nucleotide carrier signature motif motif is present at residues 235–240; that stretch reads RRRMMM. Position 268 is an N6-acetyllysine; alternate (Lys-268). Lys-268 carries the N6-succinyllysine; alternate modification. A helical transmembrane segment spans residues 274 to 291; that stretch reads AWSNVLRGMGGAFVLVLY. At 292 to 298 the chain is on the mitochondrial intermembrane side; the sequence is DEIKKYT.

Belongs to the mitochondrial carrier (TC 2.A.29) family. In terms of assembly, monomer. Component of the MMXD complex, which includes CIAO1, ERCC2, CIAO2B, MMS19 and SLC25A5/ANT2. Interacts with AK4. Interacts with TIMM44; leading to inhibit the presequence translocase TIMM23, thereby promoting stabilization of PINK1. Post-translationally, trimethylated by ANTKMT at Lys-52.

Its subcellular location is the mitochondrion inner membrane. It is found in the membrane. The enzyme catalyses ADP(in) + ATP(out) = ADP(out) + ATP(in). It carries out the reaction H(+)(in) = H(+)(out). With respect to regulation, the matrix-open state (m-state) is inhibited by the membrane-permeable bongkrekic acid (BKA). The cytoplasmic-open state (c-state) is inhibited by the membrane-impermeable toxic inhibitor carboxyatractyloside (CATR). Proton transporter activity is inhibited by ADP:ATP antiporter activity. ADP:ATP antiporter that mediates import of ADP into the mitochondrial matrix for ATP synthesis, and export of ATP out to fuel the cell. Cycles between the cytoplasmic-open state (c-state) and the matrix-open state (m-state): operates by the alternating access mechanism with a single substrate-binding site intermittently exposed to either the cytosolic (c-state) or matrix (m-state) side of the inner mitochondrial membrane. In addition to its ADP:ATP antiporter activity, also involved in mitochondrial uncoupling and mitochondrial permeability transition pore (mPTP) activity. Plays a role in mitochondrial uncoupling by acting as a proton transporter: proton transport uncouples the proton flows via the electron transport chain and ATP synthase to reduce the efficiency of ATP production and cause mitochondrial thermogenesis. Proton transporter activity is inhibited by ADP:ATP antiporter activity, suggesting that SLC25A5/ANT2 acts as a master regulator of mitochondrial energy output by maintaining a delicate balance between ATP production (ADP:ATP antiporter activity) and thermogenesis (proton transporter activity). Proton transporter activity requires free fatty acids as cofactor, but does not transport it. Probably mediates mitochondrial uncoupling in tissues that do not express UCP1. Also plays a key role in mPTP opening, a non-specific pore that enables free passage of the mitochondrial membranes to solutes of up to 1.5 kDa, and which contributes to cell death. It is however unclear if SLC25A5/ANT2 constitutes a pore-forming component of mPTP or regulates it. Acts as a regulator of mitophagy independently of ADP:ATP antiporter activity: promotes mitophagy via interaction with TIMM44, leading to inhibit the presequence translocase TIMM23, thereby promoting stabilization of PINK1. As part of the mitotic spindle-associated MMXD complex it may play a role in chromosome segregation. This chain is ADP/ATP translocase 2, found in Tachyglossus aculeatus aculeatus (Southeast Australian short-beaked echidna).